We begin with the raw amino-acid sequence, 218 residues long: Small ribosomal subunit protein uS3c (218 aa).

The KH type-2 domain maps to 47–118 (VQKQIKNSSN…KIQITLKNVL (72 aa)).

Belongs to the universal ribosomal protein uS3 family. As to quaternary structure, part of the 30S ribosomal subunit.

The protein resides in the plastid. It localises to the chloroplast. The chain is Small ribosomal subunit protein uS3c (rps3) from Angiopteris evecta (Mule's foot fern).